A 130-amino-acid polypeptide reads, in one-letter code: Small ribosomal subunit protein uS9 (130 aa).

This sequence belongs to the universal ribosomal protein uS9 family.

The sequence is that of Small ribosomal subunit protein uS9 from Xanthomonas axonopodis pv. citri (strain 306).